The chain runs to 205 residues: Molybdenum cofactor guanylyltransferase (205 aa).

Residues 14 to 16, K27, D77, and D107 each bind GTP; that span reads LAG. A Mg(2+)-binding site is contributed by D107.

It belongs to the MobA family. In terms of assembly, monomer. It depends on Mg(2+) as a cofactor.

Its subcellular location is the cytoplasm. The enzyme catalyses Mo-molybdopterin + GTP + H(+) = Mo-molybdopterin guanine dinucleotide + diphosphate. Functionally, transfers a GMP moiety from GTP to Mo-molybdopterin (Mo-MPT) cofactor (Moco or molybdenum cofactor) to form Mo-molybdopterin guanine dinucleotide (Mo-MGD) cofactor. This chain is Molybdenum cofactor guanylyltransferase, found in Burkholderia ambifaria (strain MC40-6).